A 240-amino-acid polypeptide reads, in one-letter code: uncharacterized protein (240 aa).

Disordered stretches follow at residues 125–148 and 177–240; these read RRLD…EDVD and DESN…RKSR. Acidic residues predominate over residues 130–148; sequence SSEDGEEEEENDYIDEDVD. Over residues 192 to 203 the composition is skewed to basic and acidic residues; it reads SPRKSHIDHDFV. Acidic residues predominate over residues 204–217; it reads IPEDEMLSEEEEQE. Phosphoserine is present on Ser-231.

Belongs to the UTP5 family.

It is found in the cytoplasm. Its subcellular location is the nucleus. This is an uncharacterized protein from Schizosaccharomyces pombe (strain 972 / ATCC 24843) (Fission yeast).